A 1017-amino-acid polypeptide reads, in one-letter code: Probable disease resistance protein RDL5 (1017 aa).

Positions 25-52 (QGVEDQVTELKRDLNMLSSFLKDANAKK) form a coiled coil. One can recognise an NB-ARC domain in the interval 147 to 460 (KQREMRQKFS…AEGIFQPRHY (314 aa)). 190–197 (GMGGLGKT) is an ATP binding site. 7 LRR repeats span residues 602 to 627 (LIHL…NLKL), 649 to 674 (MQEL…NLVK), 675 to 699 (LETL…RLST), 768 to 791 (PSHL…ILEK), 792 to 819 (LLQL…GFPQ), 841 to 865 (MPLL…HLPS), and 937 to 962 (MPFL…QFIY).

This sequence belongs to the disease resistance NB-LRR family.

In terms of biological role, potential disease resistance protein. This Arabidopsis thaliana (Mouse-ear cress) protein is Probable disease resistance protein RDL5 (RDL5).